A 413-amino-acid chain; its full sequence is MQRSKLKEVRGTKDLLGAEFYKFQYIQHLSQAIANRYGFIAVDTPIIEFTEVFTKTLGDDSDIVTKEMYNFQDKSGENITLRPEFTSAIVRLLINKNLVTPVKLFSSGPVFRYERPQKCRQRQFHQVNFEFFGSDSPLADVEMIALGYNILSELKLLNNITLEINFLGDKETMNSYRLSLVEYLNKYKKDLSGDSQRRLITNPLRVLDSKSPEDCEILLNAPNIGDFYTKYSSDFFTEVLDGLNDLCIPYQLNNRIVRGLDYYCNTVFEFTTSELGSQNAVIAGGRYDGLVRSMGGNDTPAVGFAMGIERVSALIDYEHKESRNVVLVPIGKDAMSYALKLAYELRCKGISVGWNYKNTGLKNMLRKINDNSIVLIFGDEELKSNTVQVKDMKTGEQQEVEKGNLLDALYNKI.

Belongs to the class-II aminoacyl-tRNA synthetase family. As to quaternary structure, homodimer.

The protein resides in the cytoplasm. The catalysed reaction is tRNA(His) + L-histidine + ATP = L-histidyl-tRNA(His) + AMP + diphosphate + H(+). The sequence is that of Histidine--tRNA ligase from Ehrlichia canis (strain Jake).